Consider the following 70-residue polypeptide: Large ribosomal subunit protein bL33m (70 aa).

It belongs to the bacterial ribosomal protein bL33 family. In terms of assembly, component of the mitochondrial large ribosomal subunit (mt-LSU). Mature yeast 74S mitochondrial ribosomes consist of a small (37S) and a large (54S) subunit. The 37S small subunit contains a 15S ribosomal RNA (15S mt-rRNA) and 34 different proteins. The 54S large subunit contains a 21S rRNA (21S mt-rRNA) and 46 different proteins. bL33m stabilizes the tRNA acceptor stem in the E-site.

It is found in the mitochondrion. In terms of biological role, component of the mitochondrial ribosome (mitoribosome), a dedicated translation machinery responsible for the synthesis of mitochondrial genome-encoded proteins, including at least some of the essential transmembrane subunits of the mitochondrial respiratory chain. The mitoribosomes are attached to the mitochondrial inner membrane and translation products are cotranslationally integrated into the membrane. The protein is Large ribosomal subunit protein bL33m (MRPL39) of Saccharomyces cerevisiae (strain ATCC 204508 / S288c) (Baker's yeast).